The chain runs to 222 residues: Cytidylate kinase (222 aa).

ATP is bound at residue 11 to 19; that stretch reads GPAGAGKST.

The protein belongs to the cytidylate kinase family. Type 1 subfamily.

The protein localises to the cytoplasm. It catalyses the reaction CMP + ATP = CDP + ADP. The enzyme catalyses dCMP + ATP = dCDP + ADP. In Desulforamulus reducens (strain ATCC BAA-1160 / DSM 100696 / MI-1) (Desulfotomaculum reducens), this protein is Cytidylate kinase.